Reading from the N-terminus, the 328-residue chain is MAKHVKVAVTGAAGQIGYALLFRLASGQAFGLDTTVDLHLLEIEPALPALKGVVMELEDCAFPLLRNMVVTSDPRVAFNDVNWALLVGAAPRKAGMERKDLLEKNGSIFAGQGKAINENAASDVRIFVVGNPCNTNCLIAMNNAPDIPKDRFYAMTRLDQNRAIGQLALKAGVDVPSVKNMIIWGNHSSTQYPDFYHATIDGKPATEVIRDKNWLLNDFIPVIQQRGAAVIKARGASSAASAANAALDSVWSLINTTPADDNYSVALCAQGQYGVDEGLIFSFPCRTENGVVSVIEEIEHNEFGQQKLKETLDELREERDAVEALGLI.

11–17 lines the NAD(+) pocket; it reads GAAGQIG. Residues Arg-92 and Arg-98 each contribute to the substrate site. Residues Asn-105, Gln-112, and 129–131 contribute to the NAD(+) site; that span reads VGN. Substrate contacts are provided by Asn-131 and Arg-162. His-187 (proton acceptor) is an active-site residue.

The protein belongs to the LDH/MDH superfamily. MDH type 2 family.

It catalyses the reaction (S)-malate + NAD(+) = oxaloacetate + NADH + H(+). Catalyzes the reversible oxidation of malate to oxaloacetate. In Coxiella burnetii (strain CbuK_Q154) (Coxiella burnetii (strain Q154)), this protein is Malate dehydrogenase.